The chain runs to 201 residues: Small ribosomal subunit protein uS4c (201 aa).

In terms of domain architecture, S4 RNA-binding spans 89 to 150; that stretch reads MRLDNIVFRL…RQKSQAIITK (62 aa).

Belongs to the universal ribosomal protein uS4 family. Part of the 30S ribosomal subunit. Contacts protein S5. The interaction surface between S4 and S5 is involved in control of translational fidelity.

The protein localises to the plastid. The protein resides in the chloroplast. Functionally, one of the primary rRNA binding proteins, it binds directly to 16S rRNA where it nucleates assembly of the body of the 30S subunit. Its function is as follows. With S5 and S12 plays an important role in translational accuracy. The chain is Small ribosomal subunit protein uS4c (rps4) from Funaria hygrometrica (Moss).